A 310-amino-acid polypeptide reads, in one-letter code: Ribosomal RNA small subunit methyltransferase H (310 aa).

Residues 32-34 (AGH), D51, F84, D102, and Q109 contribute to the S-adenosyl-L-methionine site.

This sequence belongs to the methyltransferase superfamily. RsmH family.

Its subcellular location is the cytoplasm. It carries out the reaction cytidine(1402) in 16S rRNA + S-adenosyl-L-methionine = N(4)-methylcytidine(1402) in 16S rRNA + S-adenosyl-L-homocysteine + H(+). In terms of biological role, specifically methylates the N4 position of cytidine in position 1402 (C1402) of 16S rRNA. The chain is Ribosomal RNA small subunit methyltransferase H from Campylobacter hominis (strain ATCC BAA-381 / DSM 21671 / CCUG 45161 / LMG 19568 / NCTC 13146 / CH001A).